Consider the following 589-residue polypeptide: Probable galacturonosyltransferase 6 (589 aa).

Residues 1 to 6 (MKQIRR) lie on the Cytoplasmic side of the membrane. Residues 7–27 (WQRILILALLSISVFAPLIFV) traverse the membrane as a helical; Signal-anchor for type II membrane protein segment. Residues 28-589 (SNRLKSITPV…TYLQQCNLQA (562 aa)) lie on the Lumenal side of the membrane. N-linked (GlcNAc...) asparagine glycans are attached at residues Asn83 and Asn126. The segment at 127 to 151 (KTDFKPPLSKGEKNTRVQPDRATDV) is disordered. Residues 136 to 151 (KGEKNTRVQPDRATDV) show a composition bias toward basic and acidic residues. N-linked (GlcNAc...) asparagine glycans are attached at residues Asn317 and Asn454.

The protein belongs to the glycosyltransferase 8 family. Expressed in roots, inflorescences, siliques, leaves and stems.

Its subcellular location is the golgi apparatus membrane. It participates in glycan metabolism; pectin biosynthesis. Functionally, probably involved in pectin biosynthesis in cell walls. The sequence is that of Probable galacturonosyltransferase 6 (GAUT6) from Arabidopsis thaliana (Mouse-ear cress).